The following is a 349-amino-acid chain: Pseudouridylate synthase TRUB1 (349 aa).

The residue at position 2 (Ala2) is an N-acetylalanine. A Phosphoserine modification is found at Ser11. Catalysis depends on Asp121, which acts as the Nucleophile.

It belongs to the pseudouridine synthase TruB family. Highly expressed in heart, skeletal muscle and liver. Expressed at lower levels in lung, small intestine, kidney and spleen.

The protein resides in the nucleus. The protein localises to the cytoplasm. It is found in the cytosol. The catalysed reaction is a uridine in mRNA = a pseudouridine in mRNA. The enzyme catalyses a uridine in tRNA = a pseudouridine in tRNA. It carries out the reaction uridine(55) in tRNA = pseudouridine(55) in tRNA. Functionally, pseudouridine synthase that catalyzes pseudouridylation of mRNAs and tRNAs. Mediates pseudouridylation of mRNAs with the consensus sequence 5'-GUUCNANNC-3', harboring a stem-loop structure. Constitutes the major pseudouridine synthase acting on mRNAs. Also catalyzes pseudouridylation of some tRNAs, including synthesis of pseudouridine(55) from uracil-55, in the psi GC loop of a subset of tRNAs. Promotes the processing of pri-let-7 microRNAs (pri-miRNAs) independently of its RNA pseudouridylate synthase activity. Acts by binding to the stem-loop structure on pri-let-7, preventing LIN28-binding (LIN28A and/or LIN28B), thereby enhancing the interaction between pri-let-7 and the microprocessor DGCR8, which mediates miRNA maturation. This chain is Pseudouridylate synthase TRUB1, found in Homo sapiens (Human).